The chain runs to 173 residues: CKLF-like MARVEL transmembrane domain-containing protein 8 (173 aa).

An MARVEL domain is found at 36 to 168; sequence FLRTLPGFLI…NTYFSFIAWR (133 aa). 4 helical membrane-spanning segments follow: residues 40–60, 70–90, 105–125, and 147–167; these read LPGF…TLIA, FGWV…FLII, TTVG…AAVV, and FFAF…FIAW.

Belongs to the chemokine-like factor family. Highly expressed in liver and pancreas.

Its subcellular location is the membrane. The protein localises to the cytoplasm. It localises to the nucleus. This Homo sapiens (Human) protein is CKLF-like MARVEL transmembrane domain-containing protein 8 (CMTM8).